Here is a 218-residue protein sequence, read N- to C-terminus: Oxygen regulatory protein NreC (218 aa).

A Response regulatory domain is found at 2–119 (KIVIADDHAV…QLILAVRTVY (118 aa)). Asp53 carries the post-translational modification 4-aspartylphosphate. In terms of domain architecture, HTH luxR-type spans 149–214 (SSDPFKILSK…ELVEYALKKK (66 aa)). The segment at residues 173-192 (NKDIAEKLFVSVKTVEAHKT) is a DNA-binding region (H-T-H motif).

Phosphorylated by NreB.

The protein resides in the cytoplasm. Its function is as follows. Member of the two-component regulatory system NreB/NreC involved in the control of dissimilatory nitrate/nitrite reduction in response to oxygen. Phosphorylated NreC binds to a GC-rich palindromic sequence at the promoters of the nitrate (narGHJI) and nitrite (nir) reductase operons, as well as the putative nitrate transporter gene narT, and activates their expression. The protein is Oxygen regulatory protein NreC (nreC) of Staphylococcus epidermidis (strain ATCC 12228 / FDA PCI 1200).